We begin with the raw amino-acid sequence, 475 residues long: Equilibrative nucleoside transporter 3 (475 aa).

Residues 1 to 51 (MAFASEDIAYHSSNAVYRVPSNRHEADQEALLGKPLDYPAPGLQRPEDRFN) lie on the Cytoplasmic side of the membrane. The residue at position 21 (S21) is a Phosphoserine. Positions 31–32 (LL) match the Dileucine internalization motif motif. A helical membrane pass occupies residues 52 to 72 (GAYIIFFCLGIGGLLPWNFFV). The Extracellular portion of the chain corresponds to 73–105 (TAKEYWAFKLRNCSSPASGKDPEDADILNYFES). N84 carries N-linked (GlcNAc...) asparagine glycosylation. A helical transmembrane segment spans residues 106 to 126 (YLAVASTVPSLLFLVANFLLV). The Cytoplasmic portion of the chain corresponds to 127–132 (NRIRVH). The chain crosses the membrane as a helical span at residues 133 to 153 (VRVLASLSVSLAIFVVMAVLV). At 154-162 (RVDTSSWTR) the chain is on the extracellular side. The chain crosses the membrane as a helical span at residues 163–183 (GFFSIAMACMAIISSSSTIFN). At 184 to 199 (SSVYGLTGSFPMRNAQ) the chain is on the cytoplasmic side. A helical transmembrane segment spans residues 200–220 (ALISGGAMGGTVSAVASLVDL). At 221-230 (AASSDVRDSA) the chain is on the extracellular side. Residues 231–251 (LAFFLTAAVFLGLCVGLYLLL) traverse the membrane as a helical segment. Topologically, residues 252-305 (PQLEYARYYMRPVVPIHVFSSEDSPPRDAPSTSSVAPASRAVHTPPLGPILKKT) are cytoplasmic. The segment at 272–291 (SEDSPPRDAPSTSSVAPASR) is disordered. The chain crosses the membrane as a helical span at residues 306-326 (AGLGFCAVFLYFITALIFPAI). Over 327 to 340 (STNIQPMHKGTGSP) the chain is Extracellular. The helical transmembrane segment at 341 to 361 (WTSKFYVPLTVFLLFNFADLC) threads the bilayer. Residues 362-377 (GRQVTAWIQVPGPRSK) lie on the Cytoplasmic side of the membrane. Residues 378–398 (LLPILAVSRVCLVPLFLLCNY) form a helical membrane-spanning segment. At 399 to 414 (QPRSHLTLVLFQSDIY) the chain is on the extracellular side. The chain crosses the membrane as a helical span at residues 415–437 (PILFTCLLGLSNGYLSTLVLMYG). At 438-450 (PKIVPRELAEATS) the chain is on the cytoplasmic side. A helical membrane pass occupies residues 451–471 (VVMLFYMSLGLMLGSACAALL). Residues 472–475 (EHFI) are Extracellular-facing.

The protein belongs to the SLC29A/ENT transporter (TC 2.A.57) family. Widely expressed. Highest levels in heart and liver (at protein level).

The protein resides in the lysosome membrane. Its subcellular location is the late endosome membrane. The protein localises to the mitochondrion membrane. It is found in the cell membrane. It carries out the reaction adenosine(in) = adenosine(out). The enzyme catalyses guanosine(in) = guanosine(out). It catalyses the reaction inosine(in) = inosine(out). The catalysed reaction is uridine(out) = uridine(in). It carries out the reaction cytidine(in) = cytidine(out). The enzyme catalyses thymidine(in) = thymidine(out). It catalyses the reaction 2'-deoxyadenosine(in) = 2'-deoxyadenosine(out). The catalysed reaction is 2'-deoxycytidine(in) = 2'-deoxycytidine(out). It carries out the reaction guanine(out) = guanine(in). The enzyme catalyses uracil(in) = uracil(out). It catalyses the reaction (R)-noradrenaline(out) = (R)-noradrenaline(in). The catalysed reaction is dopamine(out) = dopamine(in). It carries out the reaction serotonin(out) = serotonin(in). The enzyme catalyses tyramine(in) = tyramine(out). It catalyses the reaction ATP(in) = ATP(out). In terms of biological role, uniporter that mediates the facilitative transport of nucleoside across lysosomal and mitochondrial membranes. Functions as a non-electrogenic Na(+)-independent transporter. Substrate transport is pH-dependent and enhanced under acidic condition, probably reflecting the location of the transporter in acidic intracellular compartments. Proton is not a cotransporting ion but most likely change the ionization state of the transporter which dictates transport-permissible/impermissible conformation for nucleoside translocation. May direct the nucleoside transport from lysosomes to cytosol or cytosol to mitochondria to facilitate the fundamental function of salvage synthesis of nucleic acids. Involved in the transport of nucleosides (adenosine, guanosine, uridine, thymidine, cytidine and inosine) and deoxynucleosides (deoxyadenosine, deoxycytidine). Also mediates transport of purine nucleobases (adenine, guanine) and pyrimidine nucleobases (uracil). Also able to transport monoamine neurotransmitters dopamine, serotonin, noradrenaline and tyramine. Capable of transporting ATP. Mediates nucleoside export from lysosomes in macrophages, which regulates macrophage functions and numbers. This chain is Equilibrative nucleoside transporter 3, found in Rattus norvegicus (Rat).